The primary structure comprises 148 residues: MKAVIILGLVLLSVTVQGKIFERCELARTLKRLGLDGYRGISLANWVCLAKWESGYNTQATNYNPGDQSTDYGIFQINSHYWCNNGKTPGAVNACHISCNALLQDNIADAVTCAKRVVRDPQGIRAWVAWRNHCQNRDVSQYVQGCGV.

An N-terminal signal peptide occupies residues 1–18 (MKAVIILGLVLLSVTVQG). In terms of domain architecture, C-type lysozyme spans 19-148 (KIFERCELAR…VSQYVQGCGV (130 aa)). 4 cysteine pairs are disulfide-bonded: Cys-24–Cys-146, Cys-48–Cys-134, Cys-83–Cys-99, and Cys-95–Cys-113. Catalysis depends on residues Glu-53 and Asp-71.

Belongs to the glycosyl hydrolase 22 family. In terms of assembly, monomer.

The enzyme catalyses Hydrolysis of (1-&gt;4)-beta-linkages between N-acetylmuramic acid and N-acetyl-D-glucosamine residues in a peptidoglycan and between N-acetyl-D-glucosamine residues in chitodextrins.. In terms of biological role, lysozymes have primarily a bacteriolytic function; those in tissues and body fluids are associated with the monocyte-macrophage system and enhance the activity of immunoagents. This Erythrocebus patas (Red guenon) protein is Lysozyme C (LYZ).